A 315-amino-acid polypeptide reads, in one-letter code: Calumenin-B (315 aa).

Positions methionine 1 to serine 19 are cleaved as a signal peptide. Residues methionine 22–histidine 39 are compositionally biased toward basic and acidic residues. Positions methionine 22 to glutamate 42 are disordered. EF-hand domains are found at residues glutamate 68 to arginine 103, tryptophan 104 to aspartate 139, glutamine 151 to aspartate 186, methionine 188 to aspartate 223, tryptophan 229 to aspartate 264, and histidine 265 to serine 300. Aspartate 81, aspartate 83, aspartate 85, glutamate 92, aspartate 117, asparagine 119, aspartate 121, glutamate 128, aspartate 164, aspartate 166, aspartate 168, arginine 170, glutamate 175, aspartate 201, asparagine 203, aspartate 205, glutamate 212, aspartate 242, asparagine 244, aspartate 246, arginine 248, glutamate 253, aspartate 278, aspartate 280, aspartate 282, arginine 284, and glutamate 289 together coordinate Ca(2+). The Prevents secretion from ER motif lies at histidine 312–phenylalanine 315.

This sequence belongs to the CREC family. Interacts with ggcx.

The protein resides in the endoplasmic reticulum membrane. It is found in the golgi apparatus. The protein localises to the secreted. It localises to the melanosome. Its subcellular location is the sarcoplasmic reticulum lumen. Its function is as follows. Involved in regulation of vitamin K-dependent carboxylation of multiple N-terminal glutamate residues. Seems to inhibit gamma-carboxylase ggcx. Binds 7 calcium ions with a low affinity. This chain is Calumenin-B (calub), found in Danio rerio (Zebrafish).